The primary structure comprises 286 residues: ATP synthase gamma chain (286 aa).

Belongs to the ATPase gamma chain family. As to quaternary structure, F-type ATPases have 2 components, CF(1) - the catalytic core - and CF(0) - the membrane proton channel. CF(1) has five subunits: alpha(3), beta(3), gamma(1), delta(1), epsilon(1). CF(0) has three main subunits: a, b and c.

It localises to the cell inner membrane. Produces ATP from ADP in the presence of a proton gradient across the membrane. The gamma chain is believed to be important in regulating ATPase activity and the flow of protons through the CF(0) complex. The protein is ATP synthase gamma chain of Pseudomonas aeruginosa (strain UCBPP-PA14).